The primary structure comprises 232 residues: MKTLVICSGGLDSVSLAHKMAAEHELTGLLSFDYGQRHKKELDFAQACAKRLGVPHQIIDIRTIGASLTGSALTDDVDVPDGHYAEETMKVTVVPNRNAIMLAIAFGVAAAQKADAVALAVHGGDHFIYPDCRPGFIEAFQTMQKHALDGYADVKLLAPYVHATKADIVADGAKYRTPFEATWSCYKGADRHCGRCGTCVERREAFHLAGIDDPTSYEDADFWRATTQKRNA.

An ATP-binding site is contributed by 7 to 17; it reads CSGGLDSVSLA. 4 residues coordinate Zn(2+): C185, C193, C196, and C199.

This sequence belongs to the QueC family. The cofactor is Zn(2+).

The catalysed reaction is 7-carboxy-7-deazaguanine + NH4(+) + ATP = 7-cyano-7-deazaguanine + ADP + phosphate + H2O + H(+). The protein operates within purine metabolism; 7-cyano-7-deazaguanine biosynthesis. Functionally, catalyzes the ATP-dependent conversion of 7-carboxy-7-deazaguanine (CDG) to 7-cyano-7-deazaguanine (preQ(0)). The sequence is that of 7-cyano-7-deazaguanine synthase from Brucella abortus (strain S19).